Consider the following 340-residue polypeptide: Guanine nucleotide-binding protein subunit beta-1 (340 aa).

S29 carries the phosphoserine modification. WD repeat units lie at residues 53-92 (GHLA…KVHA), 95-134 (LRSS…GNVR), 141-179 (GHGG…QVTS), 182-221 (GHTG…CKQT), 224-263 (GHES…ELAM), 268-307 (NIIC…RSGI), and 310-340 (GHDN…RVWN).

Belongs to the WD repeat G protein beta family. G proteins are composed of 3 units, alpha, beta and gamma. Expressed in the brain neuropil and cortex, and the thoracic ganglion (at protein level). Expression detected in eye at protein level but not at mRNA level, suggesting cross reactivity of antibodies to the similar Gbeta76C protein.

Guanine nucleotide-binding proteins (G proteins) are involved as a modulator or transducer in various transmembrane signaling systems. The beta and gamma chains are required for the GTPase activity, for replacement of GDP by GTP, and for G protein-effector interaction. This Drosophila melanogaster (Fruit fly) protein is Guanine nucleotide-binding protein subunit beta-1 (Gbeta13F).